The sequence spans 129 residues: Lysozyme C (129 aa).

The C-type lysozyme domain maps to 1–129 (KVFGRCELAA…VHAWIRGCRL (129 aa)). 4 disulfides stabilise this stretch: Cys-6/Cys-127, Cys-30/Cys-115, Cys-64/Cys-80, and Cys-76/Cys-94. Residues Glu-35 and Asp-52 contribute to the active site.

This sequence belongs to the glycosyl hydrolase 22 family. As to quaternary structure, monomer.

The protein resides in the secreted. It carries out the reaction Hydrolysis of (1-&gt;4)-beta-linkages between N-acetylmuramic acid and N-acetyl-D-glucosamine residues in a peptidoglycan and between N-acetyl-D-glucosamine residues in chitodextrins.. Functionally, lysozymes have primarily a bacteriolytic function; those in tissues and body fluids are associated with the monocyte-macrophage system and enhance the activity of immunoagents. This Callipepla californica (California quail) protein is Lysozyme C (LYZ).